Here is a 2467-residue protein sequence, read N- to C-terminus: Transcription factor TFIIIB component B'' homolog (2467 aa).

Disordered regions lie at residues 1–145 (MFRR…RYRI) and 159–243 (LRKE…VDDG). Positions 1-301 (MFRRARLSVK…TYSSFRKNYY (301 aa)) are interaction with ZBTB43. Residues 81–92 (AAESSTLSSASS) show a composition bias toward low complexity. A compositionally biased stretch (polar residues) spans 99–118 (SSTSSLVQPSGSAPSQSRPL). Composition is skewed to basic and acidic residues over residues 133–144 (AKEKQPCSDRYR) and 177–186 (RPPDRSKMTM). The stretch at 144–177 (RIYKARKLREMLKEELRKEKKQWKNKFSTNESQR) forms a coiled coil. The span at 231 to 242 (NDNEDVEEEVDD) shows a compositional bias: acidic residues. In terms of domain architecture, Myb-like spans 297 to 347 (RKNYYSKPWSNKETDMFFLAISMVGTDFSMIGQLFPHRARIEIKNKFKREE). The tract at residues 357–472 (AFQEKRPFDF…QEKKRRRNQG (116 aa)) is required for phosphorylation by CSNK2A1. Disordered regions lie at residues 380-513 (EEKR…ECNK), 576-720 (SADM…VKAA), 748-844 (PPQT…PATW), 866-893 (LTAT…NAEM), 971-1200 (LQEN…SSKI), 1231-1270 (LGRH…VKPA), 1318-1388 (DSDQ…LVPI), 1409-1448 (LPVR…PELQ), 1527-1561 (KAKP…EDHL), 1592-1706 (IHSE…RASK), 1902-1926 (IVSK…LPTR), 1977-2014 (IQRE…QCVG), 2058-2083 (LDSG…SDVP), 2179-2206 (LVVQ…DLTS), 2260-2290 (GIFP…SGSL), and 2304-2449 (LPQS…EEVT). Residues 458 to 487 (EQDQNQEKKRRRNQGEANKQEATNLLERVL) adopt a coiled-coil conformation. The span at 649–660 (AAEKNHMEKETM) shows a compositional bias: basic and acidic residues. A compositionally biased stretch (basic residues) spans 809–824 (RFQKPKPNTGRRRRRI). 6 stretches are compositionally biased toward basic and acidic residues: residues 873-884 (KDSESDVKDSGR), 992-1002 (TGKDLAMKEST), 1009-1041 (TEER…RGEM), 1089-1098 (EGKELNLRET), 1112-1130 (EKTD…ERES), and 1150-1170 (DLGK…EEHS). Polar residues-rich tracts occupy residues 1180 to 1200 (LSSS…SSKI), 1251 to 1265 (DTNL…QQPL), 1318 to 1330 (DSDQ…QHNV), and 1364 to 1382 (PPNS…NQEN). Composition is skewed to basic and acidic residues over residues 1429-1448 (QIVE…PELQ), 1536-1561 (RRKD…EDHL), and 1592-1603 (IHSEESGSDRND). 2 stretches are compositionally biased toward polar residues: residues 1621 to 1642 (EQPT…SSCP) and 1650 to 1665 (YPKT…SSAS). The span at 1688-1697 (RGSKRIRGKT) shows a compositional bias: basic residues. Basic and acidic residues-rich tracts occupy residues 1902-1913 (IVSKEQSNRDAA), 1977-1996 (IQRE…DKSH), and 2068-2078 (AAKEALKETPK). Low complexity predominate over residues 2185–2199 (PSLSPSRSGSSEKPP). 3 stretches are compositionally biased toward polar residues: residues 2262-2273 (FPTSESTHATSK), 2319-2334 (PASN…SSSK), and 2414-2429 (TAGS…SSDQ).

As to quaternary structure, component of TFIIIB complex. The TFIIIB complex has two activities, alpha and beta. The TFIIIB-alpha and TFIIIB-beta activities are required for transcription of genes with TFIIIC-bound internal promoters and PSE transcription factor-bound external promoters, respectively. The TFIIIB-alpha activity complex is composed of TBP, BDP1, and a complex containing both BRF2 and at least four stably associated proteins; YY1 facilitates the formation of TFIIIB-alpha activity complex. The TFIIIB-beta activity complex is composed of TBP, BDP1, and BRF1. Interacts with BRF1; this interaction diminishes during mitosis resulting in the release of BDP1 from chromosomal templates. Component of TFIIIC complex. The TFIIIC complex has two activities, C1 and C2. The TFIIIC2 activity complex is only required for transcription of the 'classical' pol III genes whereas the TFIIIC1 activity complex is required for transcription of all pol III genes. The TFIIIC1 activity complex is composed at least of BDP1. Interacts with ZBTB43. In terms of processing, phosphorylated by CSNK2A1 during mitosis, resulting in its release from chromatin and suppression of polymerase III transcription. In terms of tissue distribution, expressed in the cochlea, particularly in the spiral ligament, the capillaries of the stria vascularis and the basilar membrane.

The protein resides in the nucleus. General activator of RNA polymerase III transcription. Requires for transcription from all three types of polymerase III promoters. Requires for transcription of genes with internal promoter elements and with promoter elements upstream of the initiation site. This chain is Transcription factor TFIIIB component B'' homolog (Bdp1), found in Mus musculus (Mouse).